The following is a 145-amino-acid chain: MKLNELKYTPGSKKEATRVGRGMASGKGKTATRGHKGQNSRSGGGVRPGFEGGQTPLFRRLPKVGFTSLNQKQYTILNLSDLETLGLEVINHESLIDHKIIKNSSVLVKILANGTLTKKVDVKVNKISKAAKSAIEKLGGKVEVI.

Residues 1 to 54 (MKLNELKYTPGSKKEATRVGRGMASGKGKTATRGHKGQNSRSGGGVRPGFEGGQ) are disordered. A compositionally biased stretch (gly residues) spans 42–52 (SGGGVRPGFEG).

The protein belongs to the universal ribosomal protein uL15 family. As to quaternary structure, part of the 50S ribosomal subunit.

Functionally, binds to the 23S rRNA. The chain is Large ribosomal subunit protein uL15 from Mycoplasma capricolum subsp. capricolum (strain California kid / ATCC 27343 / NCTC 10154).